The chain runs to 156 residues: uncharacterized protein (156 aa).

Disordered regions lie at residues 22–64 (KERV…VLKK) and 81–156 (AARA…DENE). The segment covering 43-56 (PEEDGDHSDKEDEQ) has biased composition (acidic residues). The residue at position 50 (serine 50) is a Phosphoserine. Position 108 is an N6-acetyllysine (lysine 108). Positions 121–134 (TKEEDEINKQDSVK) are enriched in basic and acidic residues. Serine 148 carries the phosphoserine modification.

This is an uncharacterized protein from Bos taurus (Bovine).